Consider the following 106-residue polypeptide: Small ribosomal subunit protein uS10 (106 aa).

It belongs to the universal ribosomal protein uS10 family. As to quaternary structure, part of the 30S ribosomal subunit.

In terms of biological role, involved in the binding of tRNA to the ribosomes. This chain is Small ribosomal subunit protein uS10, found in Prochlorococcus marinus (strain MIT 9312).